The sequence spans 184 residues: Peptide deformylase 2 (184 aa).

Residues cysteine 110 and histidine 153 each coordinate Fe cation. Glutamate 154 is an active-site residue. Histidine 157 provides a ligand contact to Fe cation.

This sequence belongs to the polypeptide deformylase family. The cofactor is Fe(2+).

The enzyme catalyses N-terminal N-formyl-L-methionyl-[peptide] + H2O = N-terminal L-methionyl-[peptide] + formate. In terms of biological role, removes the formyl group from the N-terminal Met of newly synthesized proteins. Requires at least a dipeptide for an efficient rate of reaction. N-terminal L-methionine is a prerequisite for activity but the enzyme has broad specificity at other positions. The polypeptide is Peptide deformylase 2 (Geobacillus stearothermophilus (Bacillus stearothermophilus)).